The primary structure comprises 640 residues: CREB3 regulatory factor (640 aa).

The disordered stretch occupies residues serine 308–serine 414. Residues serine 317 to serine 329 show a composition bias toward low complexity. Residues glutamate 356–aspartate 371 show a composition bias toward acidic residues. Basic and acidic residues predominate over residues glutamate 372 to serine 381. The segment covering glutamate 382–serine 402 has biased composition (acidic residues). The 64-residue stretch at threonine 522–glutamate 585 folds into the bZIP domain. Residues arginine 524–lysine 533 are basic motif. The tract at residues leucine 534–leucine 541 is leucine-zipper.

Belongs to the bZIP family. CREBRF subfamily. In terms of assembly, interacts (via leucine-zipper domain) with CREB3 (via leucine-zipper domain); the interaction promotes CREB3 degradation. Probably degraded by the proteasome. Highly expressed in intestin, testis, heart and kidney, weakly in brain adipose, colon, liver, lung and skeletal.

It is found in the nucleus. Its function is as follows. Acts as a negative regulator of the endoplasmic reticulum stress response or unfolded protein response (UPR). Represses the transcriptional activity of CREB3 during the UPR. Recruits CREB3 into nuclear foci. This is CREB3 regulatory factor (Crebrf) from Mus musculus (Mouse).